The sequence spans 656 residues: UvrABC system protein B (656 aa).

One can recognise a Helicase ATP-binding domain in the interval 24–409 (QGVRNRTPSQ…QGHIVEQILR (386 aa)). ATP is bound at residue 37-44 (GTTGSGKT). The Beta-hairpin motif lies at 90–113 (YYDYYQPEAYIARNDTYIEKSLLI). The 164-residue stretch at 426–589 (QVDDLLEEIR…ITPKPIIKAI (164 aa)) folds into the Helicase C-terminal domain. The UVR domain occupies 616 to 651 (EKLIKKYENLMLQAANAFRFDEAAQYRDKMKAAKEQ).

Belongs to the UvrB family. In terms of assembly, forms a heterotetramer with UvrA during the search for lesions. Interacts with UvrC in an incision complex.

Its subcellular location is the cytoplasm. Functionally, the UvrABC repair system catalyzes the recognition and processing of DNA lesions. A damage recognition complex composed of 2 UvrA and 2 UvrB subunits scans DNA for abnormalities. Upon binding of the UvrA(2)B(2) complex to a putative damaged site, the DNA wraps around one UvrB monomer. DNA wrap is dependent on ATP binding by UvrB and probably causes local melting of the DNA helix, facilitating insertion of UvrB beta-hairpin between the DNA strands. Then UvrB probes one DNA strand for the presence of a lesion. If a lesion is found the UvrA subunits dissociate and the UvrB-DNA preincision complex is formed. This complex is subsequently bound by UvrC and the second UvrB is released. If no lesion is found, the DNA wraps around the other UvrB subunit that will check the other stand for damage. The chain is UvrABC system protein B from Chlamydia abortus (strain DSM 27085 / S26/3) (Chlamydophila abortus).